A 458-amino-acid chain; its full sequence is Argininosuccinate lyase (458 aa).

Belongs to the lyase 1 family. Argininosuccinate lyase subfamily.

It localises to the cytoplasm. It catalyses the reaction 2-(N(omega)-L-arginino)succinate = fumarate + L-arginine. It participates in amino-acid biosynthesis; L-arginine biosynthesis; L-arginine from L-ornithine and carbamoyl phosphate: step 3/3. This chain is Argininosuccinate lyase, found in Bacillus velezensis (strain DSM 23117 / BGSC 10A6 / LMG 26770 / FZB42) (Bacillus amyloliquefaciens subsp. plantarum).